A 585-amino-acid polypeptide reads, in one-letter code: Amyloid protein-binding protein 2 (585 aa).

TPR repeat units follow at residues 50 to 83 (QGRL…HHCF), 120 to 153 (IQVG…CTLH), 206 to 239 (AALY…ITAG), 288 to 321 (SDTL…RQSV), 333 to 367 (HEDL…ITHI), 429 to 462 (AKHY…KEQL), 471 to 505 (ALSV…GKKL), and 514 to 547 (EYDY…NRLR).

As to quaternary structure, component of a CRL2 E3 ubiquitin-protein ligase complex, also named ECS (Elongin BC-CUL2/5-SOCS-box protein) complex, composed of CUL2, Elongin BC (ELOB and ELOC), RBX1 and substrate-specific adapter APPBP2. Interacts with APP; APP interaction inhibits the E3 ubiquitin-protein ligase activity of the CRL2(APPBP2) complex. Post-translationally, rapidly degraded by the proteasome upon overexpression of a C-terminal fragment of APP.

It is found in the nucleus. The protein localises to the cytoplasm. Its subcellular location is the cytoskeleton. The protein resides in the membrane. It functions in the pathway protein modification; protein ubiquitination. With respect to regulation, E3 ubiquitin-protein ligase activity of the CRL2(APPBP2) complex is inhibited by APP. In terms of biological role, substrate-recognition component of a Cul2-RING (CRL2) E3 ubiquitin-protein ligase complex of the DesCEND (destruction via C-end degrons) pathway, which recognizes a C-degron located at the extreme C terminus of target proteins, leading to their ubiquitination and degradation. The C-degron recognized by the DesCEND pathway is usually a motif of less than ten residues and can be present in full-length proteins, truncated proteins or proteolytically cleaved forms. The CRL2(APPBP2) complex specifically recognizes proteins with a -Arg-Xaa-Xaa-Gly degron at the C-terminus, leading to their ubiquitination and degradation. The CRL2(APPBP2) complex mediates ubiquitination and degradation of truncated SELENOV selenoproteins produced by failed UGA/Sec decoding, which end with a -Arg-Xaa-Xaa-Gly degron. May play a role in intracellular protein transport: may be involved in the translocation of APP along microtubules toward the cell surface. The polypeptide is Amyloid protein-binding protein 2 (Mus musculus (Mouse)).